The following is a 168-amino-acid chain: MMKLKSNQTRTYDGDGYKKRAACLCFRSESEEEVLLVSSSRHPDRWIVPGGGMEPEEEPSVAAVREVCEEAGVKGTLGRLVGIFENQERKHRTYVYVLIVTEVLEDWEDSVNIGRKREWFKIEEAVKVLQYHKPVQASYFEALRQGYSANNGTPVLPTTYSSSMSGIR.

An N-acetylmethionine modification is found at Met-1. Substrate-binding positions include Arg-10, 18–20 (KKR), and 39–41 (SSR). One can recognise a Nudix hydrolase domain in the interval 17-142 (YKKRAACLCF…KPVQASYFEA (126 aa)). Mg(2+) is bound by residues Gly-50 and Glu-66. The short motif at 51-72 (GGMEPEEEPSVAAVREVCEEAG) is the Nudix box element. The active-site Proton acceptor is the Glu-69. Glu-70 serves as a coordination point for Mg(2+). Substrate contacts are provided by residues 89-91 (RKH), Arg-115, and Lys-133.

It belongs to the Nudix hydrolase family. DIPP subfamily. As to quaternary structure, monomer. The cofactor is Mg(2+). Mn(2+) serves as cofactor. Requires Zn(2+) as cofactor.

The protein localises to the cytoplasm. The protein resides in the nucleus. It carries out the reaction diphospho-myo-inositol polyphosphate + H2O = myo-inositol polyphosphate + phosphate.. It catalyses the reaction 5-diphospho-1D-myo-inositol 1,2,3,4,6-pentakisphosphate + H2O = 1D-myo-inositol hexakisphosphate + phosphate + H(+). The catalysed reaction is 3,5-bis(diphospho)-1D-myo-inositol 1,2,4,6-tetrakisphosphate + H2O = 3-diphospho-1D-myo-inositol 1,2,4,5,6-pentakisphosphate + phosphate + 2 H(+). The enzyme catalyses [phosphate](n+1) + n H2O = (n+1) phosphate + n H(+). It carries out the reaction P(1),P(5)-bis(5'-adenosyl) pentaphosphate + H2O = ADP + ATP + 2 H(+). It catalyses the reaction P(1),P(6)-bis(5'-adenosyl) hexaphosphate + H2O = 2 ATP + 2 H(+). The catalysed reaction is P(1),P(4)-bis(5'-adenosyl) tetraphosphate + H2O = AMP + ATP + 2 H(+). The enzyme catalyses a 5'-end (N(7)-methyl 5'-triphosphoguanosine)-ribonucleoside in mRNA + H2O = N(7)-methyl-GMP + a 5'-end diphospho-ribonucleoside in mRNA + 2 H(+). It carries out the reaction a 5'-end (N(7)-methyl 5'-triphosphoguanosine)-ribonucleoside in mRNA + H2O = N(7)-methyl-GDP + a 5'-end phospho-ribonucleoside in mRNA + 2 H(+). Its activity is regulated as follows. Diphosphoinositol polyphosphate phosphohydrolase is inhibited by fluoride and InsP6. Cleaves a beta-phosphate from the diphosphate groups in PP-InsP5 (diphosphoinositol pentakisphosphate) and [PP]2-InsP4 (bisdiphosphoinositol tetrakisphosphate), suggesting that it may play a role in signal transduction. InsP6 (inositol hexakisphosphate) is not a substrate. Acts as a negative regulator of the ERK1/2 pathway. Also able to catalyze the hydrolysis of dinucleoside oligophosphates, with diadenosine 5',5'''-P1,P6-hexaphosphate (Ap6A) and diadenosine 5',5'''- P1,P5-pentaphosphate (Ap5A) being the preferred substrates. The major reaction products are ADP and p4a from Ap6A and ADP and ATP from Ap5A. Also able to hydrolyze 5- phosphoribose 1-diphosphate. Acts as a decapping enzyme that can hydrolyze both monomethylated and unmethylated capped RNAs. Hydrolyzes monomethylated capped RNA after both the alpha- and beta-phosphates generating m7GMP + ppRNA and m7GDP + pRNA. Modulates the stability of a subset of mRNAs implicated in cell motility. Divalent cations zinc, magnesium and manganese determine its substrate specificity. Exhibits endopolyphosphatase activity in the presence of zinc ions. Exhibits diphosphoinositol polyphosphate phosphohydrolase in the presence of magnesium ions and diadenosine hexaphosphate hydrolase activity in the presence of manganese ions. Plays an important role in limiting DNA damage and maintaining cell survival upon oxidative stress via its endopolyphosphatase activity. The protein is Diphosphoinositol polyphosphate phosphohydrolase 1 of Rattus norvegicus (Rat).